A 149-amino-acid polypeptide reads, in one-letter code: SsrA-binding protein (149 aa).

This sequence belongs to the SmpB family.

It localises to the cytoplasm. Its function is as follows. Required for rescue of stalled ribosomes mediated by trans-translation. Binds to transfer-messenger RNA (tmRNA), required for stable association of tmRNA with ribosomes. tmRNA and SmpB together mimic tRNA shape, replacing the anticodon stem-loop with SmpB. tmRNA is encoded by the ssrA gene; the 2 termini fold to resemble tRNA(Ala) and it encodes a 'tag peptide', a short internal open reading frame. During trans-translation Ala-aminoacylated tmRNA acts like a tRNA, entering the A-site of stalled ribosomes, displacing the stalled mRNA. The ribosome then switches to translate the ORF on the tmRNA; the nascent peptide is terminated with the 'tag peptide' encoded by the tmRNA and targeted for degradation. The ribosome is freed to recommence translation, which seems to be the essential function of trans-translation. This chain is SsrA-binding protein, found in Wolbachia pipientis wMel.